The primary structure comprises 535 residues: CTP synthase (535 aa).

The segment at 1–267 is amidoligase domain; sequence MTKYIFVTGG…DSLVCSHLKL (267 aa). Serine 13 contacts CTP. Serine 13 lines the UTP pocket. 14 to 19 lines the ATP pocket; that stretch reads SLGKGI. L-glutamine is bound at residue tyrosine 54. An ATP-binding site is contributed by aspartate 71. Mg(2+) is bound by residues aspartate 71 and glutamate 141. Residues 148–150, 188–193, and lysine 224 each bind CTP; these read DIE and KTKPTQ. UTP contacts are provided by residues 188 to 193 and lysine 224; that span reads KTKPTQ. Residues 292 to 534 enclose the Glutamine amidotransferase type-1 domain; it reads TIALVGKYVE…VHASLKTSEK (243 aa). Position 354 (glycine 354) interacts with L-glutamine. The Nucleophile; for glutamine hydrolysis role is filled by cysteine 381. L-glutamine-binding positions include 382–385, glutamate 405, and arginine 462; that span reads LGMQ. Active-site residues include histidine 507 and glutamate 509.

The protein belongs to the CTP synthase family. Homotetramer.

The catalysed reaction is UTP + L-glutamine + ATP + H2O = CTP + L-glutamate + ADP + phosphate + 2 H(+). The enzyme catalyses L-glutamine + H2O = L-glutamate + NH4(+). It carries out the reaction UTP + NH4(+) + ATP = CTP + ADP + phosphate + 2 H(+). The protein operates within pyrimidine metabolism; CTP biosynthesis via de novo pathway; CTP from UDP: step 2/2. Its activity is regulated as follows. Allosterically activated by GTP, when glutamine is the substrate; GTP has no effect on the reaction when ammonia is the substrate. The allosteric effector GTP functions by stabilizing the protein conformation that binds the tetrahedral intermediate(s) formed during glutamine hydrolysis. Inhibited by the product CTP, via allosteric rather than competitive inhibition. Catalyzes the ATP-dependent amination of UTP to CTP with either L-glutamine or ammonia as the source of nitrogen. Regulates intracellular CTP levels through interactions with the four ribonucleotide triphosphates. This is CTP synthase from Bacillus licheniformis (strain ATCC 14580 / DSM 13 / JCM 2505 / CCUG 7422 / NBRC 12200 / NCIMB 9375 / NCTC 10341 / NRRL NRS-1264 / Gibson 46).